The following is a 218-amino-acid chain: Ribose-5-phosphate isomerase A (218 aa).

Residues 28-31 (TGST), 81-84 (DGAD), and 94-97 (KGGG) each bind substrate. Residue Glu103 is the Proton acceptor of the active site. Lys121 provides a ligand contact to substrate.

It belongs to the ribose 5-phosphate isomerase family. As to quaternary structure, homodimer.

It carries out the reaction aldehydo-D-ribose 5-phosphate = D-ribulose 5-phosphate. It functions in the pathway carbohydrate degradation; pentose phosphate pathway; D-ribose 5-phosphate from D-ribulose 5-phosphate (non-oxidative stage): step 1/1. Its function is as follows. Catalyzes the reversible conversion of ribose-5-phosphate to ribulose 5-phosphate. This Thioalkalivibrio sulfidiphilus (strain HL-EbGR7) protein is Ribose-5-phosphate isomerase A.